The following is a 104-amino-acid chain: PTS system lactose-specific EIIA component (104 aa).

The region spanning 4-102 (EEATLLGFEI…MKHLIELYKR (99 aa)) is the PTS EIIA type-3 domain. The active-site Tele-phosphohistidine intermediate is H78. H78 is modified (phosphohistidine; by HPr). Residue D81 coordinates Mg(2+).

In terms of assembly, homotrimer. Mg(2+) is required as a cofactor.

The protein localises to the cytoplasm. In terms of biological role, the phosphoenolpyruvate-dependent sugar phosphotransferase system (sugar PTS), a major carbohydrate active transport system, catalyzes the phosphorylation of incoming sugar substrates concomitantly with their translocation across the cell membrane. The enzyme II LacEF PTS system is involved in lactose transport. This Streptococcus mutans serotype c (strain ATCC 700610 / UA159) protein is PTS system lactose-specific EIIA component.